The chain runs to 368 residues: Mitochondrial intermembrane space import and assembly protein 40 (368 aa).

The N-terminal 29 residues, 1–29 (MYRNTMRSASRPVIASLRSSTIRAAPRRF), are a transit peptide targeting the mitochondrion. At 30–47 (ASTAPADKPRSFKGSLVR) the chain is on the mitochondrial matrix side. A helical; Signal-anchor for type II membrane protein membrane pass occupies residues 48-65 (LGLAFGAVYYYNTSPIFA). Residues 66–368 (DEAISKTVPA…AAKKNAEKKQ (303 aa)) lie on the Mitochondrial intermembrane side of the membrane. Residues 95 to 104 (RKQIKAKSEE) show a composition bias toward basic and acidic residues. The disordered stretch occupies residues 95–144 (RKQIKAKSEETAASSKTPESQQSNPQTAAADGSPAALEEEAGQQGAFNPE). The span at 105–121 (TAASSKTPESQQSNPQT) shows a compositional bias: polar residues. Intrachain disulfides connect Cys152/Cys154, Cys163/Cys196, and Cys173/Cys186. A CHCH domain is found at 160–204 (DGPCGEEFKTAFSCFVFSQEEPKGMDCIDKFQGMQECFKKYPDIY). 2 consecutive short sequence motifs (cx9C motif) follow at residues 163-173 (CGEEFKTAFSC) and 186-196 (CIDKFQGMQEC). A disordered region spans residues 208–310 (LADDEDGAPT…GSRMVQDVAI (103 aa)). Basic and acidic residues predominate over residues 240-263 (LARETKDKTAADATKFDDSQKPAE). A compositionally biased stretch (low complexity) spans 264 to 280 (SKTPAKTTSTSTDSAQK). Over residues 283–295 (VDAHRDAEPKSDA) the composition is skewed to basic and acidic residues.

Monomer. The cofactor is Cu(2+). Zn(2+) is required as a cofactor.

It is found in the mitochondrion inner membrane. In terms of biological role, required for the import and folding of small cysteine-containing proteins (small Tim) in the mitochondrial intermembrane space (IMS). Forms a redox cycle with ERV1 that involves a disulfide relay system. Precursor proteins to be imported into the IMS are translocated in their reduced form into the mitochondria. The oxidized form of MIA40 forms a transient intermolecular disulfide bridge with the reduced precursor protein, resulting in oxidation of the precursor protein that now contains an intramolecular disulfide bond and is able to undergo folding in the IMS. The sequence is that of Mitochondrial intermembrane space import and assembly protein 40 (MIA40) from Gibberella zeae (strain ATCC MYA-4620 / CBS 123657 / FGSC 9075 / NRRL 31084 / PH-1) (Wheat head blight fungus).